The following is a 938-amino-acid chain: Isoleucine--tRNA ligase (938 aa).

The short motif at P58–H68 is the 'HIGH' region element. E566 is a binding site for L-isoleucyl-5'-AMP. Positions K607 to S611 match the 'KMSKS' region motif. K610 serves as a coordination point for ATP. Residues C906, C909, C926, and C929 each contribute to the Zn(2+) site.

Belongs to the class-I aminoacyl-tRNA synthetase family. IleS type 1 subfamily. Monomer. Zn(2+) serves as cofactor.

The protein resides in the cytoplasm. It carries out the reaction tRNA(Ile) + L-isoleucine + ATP = L-isoleucyl-tRNA(Ile) + AMP + diphosphate. Functionally, catalyzes the attachment of isoleucine to tRNA(Ile). As IleRS can inadvertently accommodate and process structurally similar amino acids such as valine, to avoid such errors it has two additional distinct tRNA(Ile)-dependent editing activities. One activity is designated as 'pretransfer' editing and involves the hydrolysis of activated Val-AMP. The other activity is designated 'posttransfer' editing and involves deacylation of mischarged Val-tRNA(Ile). This Nitratidesulfovibrio vulgaris (strain DP4) (Desulfovibrio vulgaris) protein is Isoleucine--tRNA ligase.